The following is a 282-amino-acid chain: Aldo-keto reductase BQ2027_MB2996 (282 aa).

The active-site Proton donor is the Tyr57. NADPH-binding residues include Leu197, Val235, Arg237, Ser238, Ala239, Arg243, Ser246, Asn247, and Arg273.

This sequence belongs to the aldo/keto reductase family.

The sequence is that of Aldo-keto reductase BQ2027_MB2996 from Mycobacterium bovis (strain ATCC BAA-935 / AF2122/97).